The primary structure comprises 166 residues: Ribosome maturation factor RimM (166 aa).

The 73-residue stretch at 92-164 (EGVYYDFQLI…KIIIDPIPGL (73 aa)) folds into the PRC barrel domain.

The protein belongs to the RimM family. Binds ribosomal protein uS19.

It is found in the cytoplasm. Its function is as follows. An accessory protein needed during the final step in the assembly of 30S ribosomal subunit, possibly for assembly of the head region. Essential for efficient processing of 16S rRNA. May be needed both before and after RbfA during the maturation of 16S rRNA. It has affinity for free ribosomal 30S subunits but not for 70S ribosomes. The sequence is that of Ribosome maturation factor RimM from Dehalococcoides mccartyi (strain CBDB1).